The chain runs to 128 residues: Glycine cleavage system H protein (128 aa).

The region spanning 24–106 is the Lipoyl-binding domain; that stretch reads VYSVGITEHA…YTDGWLFSIK (83 aa). At Lys-65 the chain carries N6-lipoyllysine.

It belongs to the GcvH family. As to quaternary structure, the glycine cleavage system is composed of four proteins: P, T, L and H. (R)-lipoate is required as a cofactor.

Its function is as follows. The glycine cleavage system catalyzes the degradation of glycine. The H protein shuttles the methylamine group of glycine from the P protein to the T protein. This chain is Glycine cleavage system H protein, found in Yersinia pseudotuberculosis serotype O:1b (strain IP 31758).